We begin with the raw amino-acid sequence, 337 residues long: Ornithine carbamoyltransferase, catabolic (337 aa).

Carbamoyl phosphate is bound by residues 57–60, Gln-84, Arg-108, and 135–138; these read STRT and HPTQ. Residues Asn-167, Asp-231, and 235-236 contribute to the L-ornithine site; that span reads SM. Carbamoyl phosphate-binding positions include 272-273 and Arg-317; that span reads CL.

This sequence belongs to the aspartate/ornithine carbamoyltransferase superfamily. OTCase family.

It is found in the cytoplasm. It carries out the reaction carbamoyl phosphate + L-ornithine = L-citrulline + phosphate + H(+). It functions in the pathway amino-acid degradation; L-arginine degradation via ADI pathway; carbamoyl phosphate from L-arginine: step 2/2. In terms of biological role, reversibly catalyzes the transfer of the carbamoyl group from carbamoyl phosphate (CP) to the N(epsilon) atom of ornithine (ORN) to produce L-citrulline. The protein is Ornithine carbamoyltransferase, catabolic (arcB) of Streptococcus pyogenes serotype M1.